The sequence spans 185 residues: Ribosome-recycling factor (185 aa).

The protein belongs to the RRF family.

The protein resides in the cytoplasm. In terms of biological role, responsible for the release of ribosomes from messenger RNA at the termination of protein biosynthesis. May increase the efficiency of translation by recycling ribosomes from one round of translation to another. The chain is Ribosome-recycling factor from Helicobacter hepaticus (strain ATCC 51449 / 3B1).